A 390-amino-acid polypeptide reads, in one-letter code: Elongation factor Tu 2 (390 aa).

The tr-type G domain occupies 10–201 (KPHVNVGTIG…LDDYVEVPPR (192 aa)). Residues 19-26 (GHVDHGKT) are G1. A GTP-binding site is contributed by 19–26 (GHVDHGKT). Residue Thr-26 participates in Mg(2+) binding. The tract at residues 55–59 (GITIA) is G2. Positions 76–79 (DCPG) are G3. Residues 76–80 (DCPGH) and 131–134 (NKAD) contribute to the GTP site. The G4 stretch occupies residues 131–134 (NKAD). The segment at 168–170 (SAL) is G5.

The protein belongs to the TRAFAC class translation factor GTPase superfamily. Classic translation factor GTPase family. EF-Tu/EF-1A subfamily. As to quaternary structure, monomer.

It localises to the cytoplasm. The enzyme catalyses GTP + H2O = GDP + phosphate + H(+). GTP hydrolase that promotes the GTP-dependent binding of aminoacyl-tRNA to the A-site of ribosomes during protein biosynthesis. This chain is Elongation factor Tu 2, found in Wolbachia sp. subsp. Brugia malayi (strain TRS).